A 29-amino-acid chain; its full sequence is Cytolysin Oshem 1 (29 aa).

The protein localises to the secreted. The protein resides in the nematocyst. It is found in the target cell membrane. Cytolysin that shows moderate hemolysis and moderate myonecrosis. In Olindias sambaquiensis (Hydromedusa), this protein is Cytolysin Oshem 1.